The sequence spans 620 residues: Chaperone protein HscA homolog (620 aa).

It belongs to the heat shock protein 70 family.

Chaperone involved in the maturation of iron-sulfur cluster-containing proteins. Has a low intrinsic ATPase activity which is markedly stimulated by HscB. This chain is Chaperone protein HscA homolog, found in Pseudomonas fluorescens (strain SBW25).